The primary structure comprises 87 residues: Antitoxin RelB1 (87 aa).

In terms of biological role, antitoxin component of a type II toxin-antitoxin (TA) system. Neutralizes the effect of cognate toxin RelE1, but no other RelE or ParE toxin. The sequence is that of Antitoxin RelB1 (relB1) from Caulobacter vibrioides (strain ATCC 19089 / CIP 103742 / CB 15) (Caulobacter crescentus).